Consider the following 530-residue polypeptide: Nectin-2 (530 aa).

An N-terminal signal peptide occupies residues 1 to 31; sequence MARAAVLPPSRLSPTLPLLPLLLLLLQETGA. Positions 32 to 147 constitute an Ig-like V-type domain; that stretch reads QDVRVRVLPE…NGTRRGVTWL (116 aa). Residues 32-351 lie on the Extracellular side of the membrane; that stretch reads QDVRVRVLPE…STAGAGATGG (320 aa). Cys-54 and Cys-131 form a disulfide bridge. 2 N-linked (GlcNAc...) asparagine glycosylation sites follow: Asn-128 and Asn-138. Ig-like C2-type domains are found at residues 153-247 and 252-337; these read PENH…VTLS and PEVS…VILV. 2 disulfides stabilise this stretch: Cys-174–Cys-229 and Cys-274–Cys-320. N-linked (GlcNAc...) asparagine glycosylation occurs at Asn-315. A helical transmembrane segment spans residues 352–372; sequence IIGGIIAAIIATAVAGTGILI. Residues 373–530 lie on the Cytoplasmic side of the membrane; it reads CRQQRKEQRL…DFFVSRAMYV (158 aa). The tract at residues 382-407 is disordered; it reads LQAADEEEELEGPPSYKPPTPKAKLE. Thr-401 is subject to Phosphothreonine. Phosphoserine is present on Ser-424.

Belongs to the nectin family. As to quaternary structure, can form trans-heterodimers with NECTIN3. Interacts with CD226 or with PVRIG; these interactions are competitive and have a differential functional outcome on T-cell activation, either positive or negative, respectively. Binds with low affinity to TIGIT. Brain, spinal cord, spleen, kidney, heart and liver.

It localises to the cell membrane. In terms of biological role, modulator of T-cell signaling. Can be either a costimulator of T-cell function, or a coinhibitor, depending on the receptor it binds to. Upon binding to CD226, stimulates T-cell proliferation and cytokine production, including that of IL2, IL5, IL10, IL13, and IFNG. Upon interaction with PVRIG, inhibits T-cell proliferation. These interactions are competitive. Probable cell adhesion protein. The chain is Nectin-2 from Mus musculus (Mouse).